The following is a 593-amino-acid chain: NADH-quinone oxidoreductase subunit C/D (593 aa).

Residues 1 to 184 form an NADH dehydrogenase I subunit C region; sequence MTADSVLSIP…DPYSLSAAKQ (184 aa). The segment at 208 to 593 is NADH dehydrogenase I subunit D; the sequence is DFMFLNLGPN…IDFVMADVDR (386 aa).

The protein in the N-terminal section; belongs to the complex I 30 kDa subunit family. It in the C-terminal section; belongs to the complex I 49 kDa subunit family. As to quaternary structure, NDH-1 is composed of 13 different subunits. Subunits NuoB, CD, E, F, and G constitute the peripheral sector of the complex.

It localises to the cell inner membrane. It carries out the reaction a quinone + NADH + 5 H(+)(in) = a quinol + NAD(+) + 4 H(+)(out). NDH-1 shuttles electrons from NADH, via FMN and iron-sulfur (Fe-S) centers, to quinones in the respiratory chain. The immediate electron acceptor for the enzyme in this species is believed to be ubiquinone. Couples the redox reaction to proton translocation (for every two electrons transferred, four hydrogen ions are translocated across the cytoplasmic membrane), and thus conserves the redox energy in a proton gradient. In Azotobacter vinelandii (strain DJ / ATCC BAA-1303), this protein is NADH-quinone oxidoreductase subunit C/D.